Reading from the N-terminus, the 393-residue chain is Cholinephosphotransferase 1 (393 aa).

The Lumenal segment spans residues Met-1–Thr-40. A helical membrane pass occupies residues Ile-41 to Phe-61. Over Asn-62–Glu-172 the chain is Cytoplasmic. The chain crosses the membrane as a helical span at residues Phe-173–Tyr-193. At Gly-194–Asp-210 the chain is on the lumenal side. The chain crosses the membrane as a helical span at residues Phe-211–Phe-231. At Asn-232–Lys-263 the chain is on the cytoplasmic side. The chain crosses the membrane as a helical span at residues Ala-264 to Ile-284. Residue Gln-285 is a topological domain, lumenal. Residues Pro-286–Gly-306 form a helical membrane-spanning segment. Residues Arg-307–Met-320 are Cytoplasmic-facing. The helical transmembrane segment at Val-321–Val-341 threads the bilayer. Residues Leu-342 to Ser-348 are Lumenal-facing. A helical membrane pass occupies residues Ile-349 to Ile-369. Residues Asn-370–Ile-393 are Cytoplasmic-facing.

It belongs to the CDP-alcohol phosphatidyltransferase class-I family. It depends on Mg(2+) as a cofactor.

It localises to the microsome membrane. The protein localises to the endoplasmic reticulum membrane. Its subcellular location is the mitochondrion outer membrane. It carries out the reaction CDP-choline + a 1,2-diacyl-sn-glycerol = a 1,2-diacyl-sn-glycero-3-phosphocholine + CMP + H(+). The enzyme catalyses CDP-N,N-dimethylethanolamine + a 1,2-diacyl-sn-glycerol = a 1,2-diacyl-sn-glycero-3-phospho-N,N-dimethylethanolamine + CMP + H(+). It participates in phospholipid metabolism; phosphatidylcholine biosynthesis; phosphatidylcholine from phosphocholine: step 2/2. Its activity is regulated as follows. Requires a divalent cation activator, and is inhibited by CMP. Activated by phospholipids, especially phosphatidylcholine. Catalyzes the final step in the CDP-choline route leading to phosphatidylcholin (PC). Preferentially uses CDP-monomethylethanolamine as aminoalcohol substrate. Shows highest activity toward di- and mono-unsaturated diacylglycerol species as lipid substrates. The CDP-choline pathway only contributes to net PC synthesis if exogenous choline is present. In its absence, this pathway recycles choline from PC turnover and may contribute to maintaining the proper PC species composition. This Saccharomyces cerevisiae (strain ATCC 204508 / S288c) (Baker's yeast) protein is Cholinephosphotransferase 1 (CPT1).